A 552-amino-acid polypeptide reads, in one-letter code: Urocanate hydratase (552 aa).

Residues 48-49 (GG), Gln-126, 172-174 (GMG), Glu-192, Arg-197, 238-239 (NA), 259-263 (QTSAH), 269-270 (YV), and Tyr-318 each bind NAD(+). Cys-406 is a catalytic residue. Gly-488 is a binding site for NAD(+).

The protein belongs to the urocanase family. NAD(+) is required as a cofactor.

Its subcellular location is the cytoplasm. The enzyme catalyses 4-imidazolone-5-propanoate = trans-urocanate + H2O. The protein operates within amino-acid degradation; L-histidine degradation into L-glutamate; N-formimidoyl-L-glutamate from L-histidine: step 2/3. Its function is as follows. Catalyzes the conversion of urocanate to 4-imidazolone-5-propionate. This Herpetosiphon aurantiacus (strain ATCC 23779 / DSM 785 / 114-95) protein is Urocanate hydratase.